A 508-amino-acid chain; its full sequence is MAP kinase kinase MKK1/SSP32 (508 aa).

Disordered regions lie at residues 1 to 21 (MASLFRPPESAKCNPNSPRLK), 35 to 95 (IYLT…LSIN), and 130 to 158 (ELSGNSDLTPSSMASPFSHTNTSSPYLRN). Over residues 35-47 (IYLTSNGSSTTAY) the composition is skewed to polar residues. Over residues 48–66 (SSHTPEPLTSSTSTLFSQT) the composition is skewed to low complexity. 2 stretches are compositionally biased toward polar residues: residues 67–79 (RLHPSDSSMTLNT) and 131–158 (LSGNSDLTPSSMASPFSHTNTSSPYLRN). Ser-192 carries the phosphoserine modification. Residues 221-488 (IETLGILGEG…PRQMINHPWI (268 aa)) form the Protein kinase domain. Residues 227-235 (LGEGAGGSV) and Lys-250 each bind ATP. The active-site Proton acceptor is Asp-349.

It belongs to the protein kinase superfamily. STE Ser/Thr protein kinase family. MAP kinase kinase subfamily.

It catalyses the reaction L-seryl-[protein] + ATP = O-phospho-L-seryl-[protein] + ADP + H(+). The catalysed reaction is L-threonyl-[protein] + ATP = O-phospho-L-threonyl-[protein] + ADP + H(+). It carries out the reaction L-tyrosyl-[protein] + ATP = O-phospho-L-tyrosyl-[protein] + ADP + H(+). Its function is as follows. Involved in a signal transduction pathway that play a role in yeast cell morphogenesis and cell growth. This pathway seems to start by SMP3; then involve the kinase PKC1 that may act on the BCK1 kinase that then phosphorylates MKK1 and MKK2 which themselves phosphorylate the MPK1 kinase. This chain is MAP kinase kinase MKK1/SSP32 (MKK1), found in Saccharomyces cerevisiae (strain ATCC 204508 / S288c) (Baker's yeast).